Reading from the N-terminus, the 461-residue chain is Probable Xaa-Pro aminopeptidase PEPP (461 aa).

Mn(2+)-binding residues include aspartate 257, aspartate 268, glutamate 391, and glutamate 431.

Belongs to the peptidase M24B family. Requires Mn(2+) as cofactor.

It catalyses the reaction Release of any N-terminal amino acid, including proline, that is linked to proline, even from a dipeptide or tripeptide.. Functionally, catalyzes the removal of a penultimate prolyl residue from the N-termini of peptides. This is Probable Xaa-Pro aminopeptidase PEPP (PEPP) from Colletotrichum graminicola (strain M1.001 / M2 / FGSC 10212) (Maize anthracnose fungus).